The chain runs to 969 residues: Vacuolar membrane protease (969 aa).

The Cytoplasmic portion of the chain corresponds to Met1 to Pro12. The helical transmembrane segment at Ile13–Ile33 threads the bilayer. Topologically, residues Asp34 to Thr381 are vacuolar. The N-linked (GlcNAc...) asparagine glycan is linked to Asn125. The Zn(2+) site is built by His166 and Asp178. The active-site Proton acceptor is Glu216. Residues Glu217, Glu242, and His315 each contribute to the Zn(2+) site. Residue Asn355 is glycosylated (N-linked (GlcNAc...) asparagine). The helical transmembrane segment at Ile382–Trp402 threads the bilayer. Residues Ala403 to Val438 lie on the Cytoplasmic side of the membrane. The chain crosses the membrane as a helical span at residues Leu439–Ile459. Residues Asn460–Ala469 lie on the Vacuolar side of the membrane. A helical transmembrane segment spans residues Ser470–Leu490. At Arg491–Tyr505 the chain is on the cytoplasmic side. A helical membrane pass occupies residues Gly506–Gly526. Residues Lys527 to Gly531 are Vacuolar-facing. The helical transmembrane segment at Ser532–Leu552 threads the bilayer. Over Glu553 to Trp662 the chain is Cytoplasmic. Residues Asp571–Asn629 are disordered. Positions Gln581 to Ala592 are enriched in polar residues. A helical membrane pass occupies residues Ile663–Leu683. Topologically, residues Leu684–Met698 are vacuolar. The helical transmembrane segment at Leu699–Phe719 threads the bilayer. Over Leu720–Val727 the chain is Cytoplasmic. The chain crosses the membrane as a helical span at residues Thr728–Phe748. Residues Ser749–Ile969 lie on the Vacuolar side of the membrane. Asn840 carries N-linked (GlcNAc...) asparagine glycosylation.

Belongs to the peptidase M28 family. The cofactor is Zn(2+).

The protein localises to the vacuole membrane. Its function is as follows. May be involved in vacuolar sorting and osmoregulation. This chain is Vacuolar membrane protease, found in Tuber melanosporum (strain Mel28) (Perigord black truffle).